The chain runs to 354 residues: Uroporphyrinogen decarboxylase (354 aa).

Substrate contacts are provided by residues Arg-27 to Arg-31, Asp-77, Tyr-154, Thr-209, and His-327.

This sequence belongs to the uroporphyrinogen decarboxylase family. Homodimer.

The protein localises to the cytoplasm. The enzyme catalyses uroporphyrinogen III + 4 H(+) = coproporphyrinogen III + 4 CO2. Its pathway is porphyrin-containing compound metabolism; protoporphyrin-IX biosynthesis; coproporphyrinogen-III from 5-aminolevulinate: step 4/4. Its function is as follows. Catalyzes the decarboxylation of four acetate groups of uroporphyrinogen-III to yield coproporphyrinogen-III. The chain is Uroporphyrinogen decarboxylase from Escherichia coli O81 (strain ED1a).